Consider the following 244-residue polypeptide: Small ribosomal subunit protein uS3 (244 aa).

One can recognise a KH type-2 domain in the interval 39-107; the sequence is MRKFVMSELK…ETHLNIVEVR (69 aa). Residues 214–244 form a disordered region; that stretch reads ASERRALEGDAQGPASRERDRGDRRRERDNA. Over residues 229–244 the composition is skewed to basic and acidic residues; that stretch reads SRERDRGDRRRERDNA.

It belongs to the universal ribosomal protein uS3 family. Part of the 30S ribosomal subunit. Forms a tight complex with proteins S10 and S14.

Functionally, binds the lower part of the 30S subunit head. Binds mRNA in the 70S ribosome, positioning it for translation. This is Small ribosomal subunit protein uS3 from Rhizobium etli (strain CIAT 652).